We begin with the raw amino-acid sequence, 149 residues long: MADQLTEEQIAEFKEAFSLFDKDGDGTITTKELGTVMRSLGQNPTEAELQDMINEVDADGNGTIDFPEFLTMMARKMKDTDSEEEILEAFKVFDKDGNGFISAAELRHIMTNLGEKLTDEEVDEMIREADIDGDGQINYEEFVKMMMSK.

EF-hand domains follow at residues 8–43, 44–79, 81–116, and 117–149; these read EQIAEFKEAFSLFDKDGDGTITTKELGTVMRSLGQN, PTEAELQDMINEVDADGNGTIDFPEFLTMMARKMKD, DSEEEILEAFKVFDKDGNGFISAAELRHIMTNLGEK, and LTDEEVDEMIREADIDGDGQINYEEFVKMMMSK. 19 residues coordinate Ca(2+): Asp21, Asp23, Asp25, Thr27, Glu32, Asp57, Asp59, Asn61, Thr63, Glu68, Asp94, Asp96, Asn98, Glu105, Asp130, Asp132, Asp134, Gln136, and Glu141.

Belongs to the calmodulin family.

Calmodulin mediates the control of a large number of enzymes, ion channels and other proteins by Ca(2+). Among the enzymes to be stimulated by the calmodulin-Ca(2+) complex are a number of protein kinases and phosphatases. The protein is Calmodulin of Globisporangium splendens (Leaf rot fungus).